Reading from the N-terminus, the 150-residue chain is Deoxyuridine 5'-triphosphate nucleotidohydrolase (150 aa).

Residues 69 to 71, Asn-82, 86 to 88, and Met-96 contribute to the substrate site; these read RSG and LID.

This sequence belongs to the dUTPase family. The cofactor is Mg(2+).

The enzyme catalyses dUTP + H2O = dUMP + diphosphate + H(+). Its pathway is pyrimidine metabolism; dUMP biosynthesis; dUMP from dCTP (dUTP route): step 2/2. This enzyme is involved in nucleotide metabolism: it produces dUMP, the immediate precursor of thymidine nucleotides and it decreases the intracellular concentration of dUTP so that uracil cannot be incorporated into DNA. In Leptothrix cholodnii (strain ATCC 51168 / LMG 8142 / SP-6) (Leptothrix discophora (strain SP-6)), this protein is Deoxyuridine 5'-triphosphate nucleotidohydrolase.